The following is a 511-amino-acid chain: Ribosome biogenesis protein YTM1 (511 aa).

The ubiquitin-like (UBL) domain stretch occupies residues 9-112 (VKVVFVTRDE…EVSLSIEYIR (104 aa)). Residues 122-511 (SFSNPDWVAA…IQINNNPQSA (390 aa)) are sufficient for interaction with ERB1 and association with 66S pre-ribosomes. 7 WD repeats span residues 124 to 168 (SNPD…TGQL), 170 to 208 (GHNS…YRRK), 248 to 287 (GHTA…MPAI), 332 to 372 (GHSA…AVQS), 383 to 423 (TRST…QVAT), 429 to 470 (GHTN…SLHV), and 477 to 511 (TENN…PQSA). The tract at residues 207 to 228 (RKEPGQVGKKELNYDSEEDSDE) is disordered. The segment covering 208–219 (KEPGQVGKKELN) has biased composition (basic and acidic residues).

The protein belongs to the WD repeat WDR12/YTM1 family. In terms of assembly, component of the NOP7 complex, composed of ERB1, NOP7 and YTM1. The complex is held together by ERB1, which interacts with NOP7 via its N-terminal domain and with YTM1 via a high-affinity interaction between the seven-bladed beta-propeller domains of the 2 proteins. The NOP7 complex associates with the 66S pre-ribosome. Interacts (via UBL domain) with MDN1 (via VWFA/MIDAS domain).

The protein resides in the nucleus. It localises to the nucleolus. The protein localises to the nucleoplasm. Functionally, component of the NOP7 complex, which is required for maturation of the 25S and 5.8S ribosomal RNAs and formation of the 60S ribosome. In Yarrowia lipolytica (strain CLIB 122 / E 150) (Yeast), this protein is Ribosome biogenesis protein YTM1.